The primary structure comprises 497 residues: NADH-quinone oxidoreductase subunit N (497 aa).

13 helical membrane-spanning segments follow: residues 12 to 32 (MAPE…DLAL), 40 to 60 (PLAW…AAMI), 80 to 100 (AFKF…AEWA), 116 to 136 (LFAL…TLFV), 166 to 186 (VING…VFGL), 208 to 228 (LALA…TVPF), 240 to 260 (PVPA…ALLL), 284 to 304 (MQPI…VVAL), 316 to 336 (SGIA…WAMI), 341 to 361 (MYLL…AHIV), 383 to 403 (AAAL…AGFI), 430 to 450 (TVIS…RPTF), and 457 to 477 (LPAG…AIGW).

It belongs to the complex I subunit 2 family. In terms of assembly, NDH-1 is composed of 14 different subunits. Subunits NuoA, H, J, K, L, M, N constitute the membrane sector of the complex.

The protein resides in the cell membrane. The catalysed reaction is a quinone + NADH + 5 H(+)(in) = a quinol + NAD(+) + 4 H(+)(out). NDH-1 shuttles electrons from NADH, via FMN and iron-sulfur (Fe-S) centers, to quinones in the respiratory chain. The immediate electron acceptor for the enzyme in this species is believed to be a menaquinone. Couples the redox reaction to proton translocation (for every two electrons transferred, four hydrogen ions are translocated across the cytoplasmic membrane), and thus conserves the redox energy in a proton gradient. This is NADH-quinone oxidoreductase subunit N from Geobacillus kaustophilus (strain HTA426).